A 560-amino-acid chain; its full sequence is Alpha-keto-acid decarboxylase (560 aa).

E61 contributes to the thiamine diphosphate binding site. Positions 396 to 478 (TSFYGMADHR…VVVNNDGYTV (83 aa)) are thiamine pyrophosphate binding. Mg(2+)-binding residues include D446, N473, and G475.

This sequence belongs to the TPP enzyme family. Requires a metal cation as cofactor. It depends on thiamine diphosphate as a cofactor.

Functionally, decarboxylates branched-chain and aromatic alpha-keto acids to aldehydes. The protein is Alpha-keto-acid decarboxylase (kdc) of Mycobacterium bovis (strain ATCC BAA-935 / AF2122/97).